We begin with the raw amino-acid sequence, 145 residues long: D-aminoacyl-tRNA deacylase (145 aa).

The short motif at 137 to 138 is the Gly-cisPro motif, important for rejection of L-amino acids element; that stretch reads GP.

This sequence belongs to the DTD family. Homodimer.

Its subcellular location is the cytoplasm. The enzyme catalyses glycyl-tRNA(Ala) + H2O = tRNA(Ala) + glycine + H(+). It carries out the reaction a D-aminoacyl-tRNA + H2O = a tRNA + a D-alpha-amino acid + H(+). Functionally, an aminoacyl-tRNA editing enzyme that deacylates mischarged D-aminoacyl-tRNAs. Also deacylates mischarged glycyl-tRNA(Ala), protecting cells against glycine mischarging by AlaRS. Acts via tRNA-based rather than protein-based catalysis; rejects L-amino acids rather than detecting D-amino acids in the active site. By recycling D-aminoacyl-tRNA to D-amino acids and free tRNA molecules, this enzyme counteracts the toxicity associated with the formation of D-aminoacyl-tRNA entities in vivo and helps enforce protein L-homochirality. The protein is D-aminoacyl-tRNA deacylase of Salmonella agona (strain SL483).